We begin with the raw amino-acid sequence, 883 residues long: MNEQYSALRSNVSMLGKVLGETIKDALGEHILDRVETIRKLSKSSRAGNEANRQELLTTLQNLSNDELLPVARAFSQFLNLANTAEQYHSISPKGEAASNPEVIARTLRKLKNQPDLNDATIKKAVESLSLELVLTAHPTEITRRTLIHKMGEINNCLKQLDNTDIADYERHQVMRRLRQLIAQSWHTDEIRKQRPSPVDEAKWGFAVVENSLWQGVPNYLRELNEQLEENLGYKLPVDFVPVRFTSWMGGDRDGNPNVTADITRHVLLLSRWKATDLFLKDIHVLVSELSMVDATPELLALVGEEGASEPYRYLMKKLRARLMATQSWLEARLKGEKLPKPAGLLTQNEQLWEPLYACYQSLQACGMGIIANGELLDTLRRVKCFGVPLVRIDIRQESTRHTEALGEITRYLGIGDYESWSEADKQALLIRELNSKRPLLPRNWEPSNDTREVLETCKVIAEAPKGSIAAYVISMAKTPSDVLAVHLLLKEAGIGFAMPVAPLFETLDDLNNADDVMTQLLNIDWYRGLIQGKQMVMIGYSDSAKDAGVMAASWAQYQAQDALIKTCEKAGIELTLFHGRGGSIGRGGAPAHAALLSQPPGSLKGGLRVTEQGEMIRFKYGLPEVTVSSLSLYTSAILEANLLPPPEPKDSWRHIMDELSVISCETYRGYVRENKDFVPYFRSATPEQELGKLPLGSRPAKRRPTGGVESLRAIPWIFAWTQNRLMLPAWLGAGTALQKVVEDGKQSELEAMCRDWPFFSTRLGMLEMVFSKADLWLADYYDQRLVAKTLWPLGKELRDLLEEDIKVVLAIANDSHLMADLPWIAESIQLRNVYTDPLNVLQAELLYRSRLTEEQGKSPDPRVEQALMVTIAGVAAGMRNTG.

Active-site residues include His-138 and Lys-546.

It belongs to the PEPCase type 1 family. It depends on Mg(2+) as a cofactor.

It carries out the reaction oxaloacetate + phosphate = phosphoenolpyruvate + hydrogencarbonate. In terms of biological role, forms oxaloacetate, a four-carbon dicarboxylic acid source for the tricarboxylic acid cycle. The chain is Phosphoenolpyruvate carboxylase from Salmonella choleraesuis (strain SC-B67).